Reading from the N-terminus, the 363-residue chain is tRNA(Met) cytidine acetate ligase (363 aa).

ATP is bound by residues 7–20 (IAEFNPFHNGHKYL), G96, N152, and R175.

Belongs to the TmcAL family.

The protein resides in the cytoplasm. It carries out the reaction cytidine(34) in elongator tRNA(Met) + acetate + ATP = N(4)-acetylcytidine(34) in elongator tRNA(Met) + AMP + diphosphate. Its function is as follows. Catalyzes the formation of N(4)-acetylcytidine (ac(4)C) at the wobble position of elongator tRNA(Met), using acetate and ATP as substrates. First activates an acetate ion to form acetyladenylate (Ac-AMP) and then transfers the acetyl group to tRNA to form ac(4)C34. The protein is tRNA(Met) cytidine acetate ligase of Streptococcus thermophilus (strain ATCC BAA-491 / LMD-9).